The chain runs to 364 residues: DNA-(apurinic or apyrimidinic site) endonuclease (364 aa).

2 stretches are compositionally biased toward basic and acidic residues: residues 1 to 12 (MKRFFKPIEKEN) and 23 to 39 (PEKRDGDGDGVEEEKNQ). Residues 1-42 (MKRFFKPIEKENSPAAKKPCLSPEKRDGDGDGVEEEKNQNEP) form a disordered region. Mg(2+) is bound at residue Glu80. The active site involves Tyr182. Mg(2+) contacts are provided by Asp222, Asn224, and Asp342. Asp222 (proton donor/acceptor) is an active-site residue.

It belongs to the DNA repair enzymes AP/exoA family. As to quaternary structure, interacts with ROS1. ROS1 is required for APE1L to stably associate with the DNA substrate. Requires Mg(2+) as cofactor. As to expression, expressed in leaves, flower buds and developing siliques. Not detected in roots.

It is found in the nucleus. Its subcellular location is the nucleolus. Its function is as follows. Apurinic/apyrimidinic (AP) endonuclease involved in active DNA demethylation and gene imprinting. According to a report, also displays an in vitro 3'-phosphatase activity. According to another report, has no in vitro 3'-phosphatase activity. Catalyzes the conversion of the 3'-blocking groups 3'-phosphor-alpha,beta-unsaturated aldehyde (3'-PUA) generated by ROS1 to 3'-OH. Has a strong non-specific affinity to DNA. Redundant with APE2 and at least one functional allele is required for seed viability. The chain is DNA-(apurinic or apyrimidinic site) endonuclease from Arabidopsis thaliana (Mouse-ear cress).